The following is a 282-amino-acid chain: N-methyltransferase gliN (282 aa).

Belongs to the methyltransferase superfamily. LaeA methyltransferase family.

It participates in mycotoxin biosynthesis. Functionally, N-methyltransferase; part of the gene cluster that mediates the biosynthesis of gliotoxin, a member of the epipolythiodioxopiperazine (ETP) class of toxins characterized by a disulfide bridged cyclic dipeptide. The first step in gliotoxin biosynthesis is the condensation of serine and phenylalanine to form the cyclo-L-phenylalanyl-L-serine diketopiperazine (DKP) by the NRPS gliP. GliP is also able to produce the DKP cyclo-L-tryptophanyl-L-serine, suggesting that the substrate specificity of the first adenylation (A) domain in gliP is sufficiently relaxed to accommodate both L-Phe and L-Trp. The cytochrome P450 monooxygenase gliC has been shown to catalyze the subsequent hydroxylation of the alpha-carbon of L-Phe in cyclo-L-phenylalanyl-L-serine whereas the second cytochrome P450 enzyme, gliF, is presumably involved in the modification of the DKP side chain. The glutathione S-transferase (GST) gliG then forms a bis-glutathionylated biosynthetic intermediate which is responsible for the sulfurization of gliotoxin. This bis-glutathionylated intermediate is subsequently processed by the gamma-glutamyl cyclotransferase gliK to remove both gamma-glutamyl moieties. Subsequent processing via gliI yields a biosynthetic intermediate, which is N-methylated via the N-methyltransferase gliN, before the gliotoxin oxidoreductase gliT-mediated disulfide bridge closure. GliN-mediated amide methylation confers stability to ETP, damping the spontaneous formation of tri- and tetrasulfides. Intracellular dithiol gliotoxin oxidized by gliT is subsequently effluxed by gliA. Gliotoxin contributes to pathogenesis during invasive aspergillosis. In macrophages and neutrophils, gliotoxin showed inhibition of various different cell functions including cytokine production, antigen presentation, phagocytosis, and production of reactive oxygen species. The sequence is that of N-methyltransferase gliN from Aspergillus fumigatus (strain ATCC MYA-4609 / CBS 101355 / FGSC A1100 / Af293) (Neosartorya fumigata).